A 247-amino-acid polypeptide reads, in one-letter code: Cationic trypsin-3 (247 aa).

The signal sequence occupies residues M1–A15. The propeptide at L16–K24 is activation peptide. Residues I25–A245 form the Peptidase S1 domain. Intrachain disulfides connect C31-C161, C49-C65, C133-C234, C140-C207, C172-C186, and C197-C221. The active-site Charge relay system is H64. Ca(2+)-binding residues include E76, N78, V81, and E86. Catalysis depends on D108, which acts as the Charge relay system. Catalysis depends on S201, which acts as the Charge relay system.

Belongs to the peptidase S1 family. Ca(2+) is required as a cofactor.

Its subcellular location is the secreted. It localises to the extracellular space. The catalysed reaction is Preferential cleavage: Arg-|-Xaa, Lys-|-Xaa.. The sequence is that of Cationic trypsin-3 (Try3) from Rattus norvegicus (Rat).